The chain runs to 106 residues: SH3 domain-binding glutamic acid-rich-like protein 2-A (106 aa).

Residues 61-67 carry the SH3-binding motif; that stretch reads QGNPLPP.

This sequence belongs to the SH3BGR family.

It is found in the nucleus. This Xenopus laevis (African clawed frog) protein is SH3 domain-binding glutamic acid-rich-like protein 2-A (sh3bgrl2-a).